A 512-amino-acid polypeptide reads, in one-letter code: D-alanine--D-alanyl carrier protein ligase (512 aa).

An ATP-binding site is contributed by 152–153 (TS). D199 serves as a coordination point for D-alanine. ATP is bound at residue 294 to 299 (NAYGPT). V303 lines the D-alanine pocket. Residues D385, 397–400 (YGGR), and K499 each bind ATP. D-alanine is bound at residue K499.

It belongs to the ATP-dependent AMP-binding enzyme family. DltA subfamily.

The protein localises to the cytoplasm. The catalysed reaction is holo-[D-alanyl-carrier protein] + D-alanine + ATP = D-alanyl-[D-alanyl-carrier protein] + AMP + diphosphate. It functions in the pathway cell wall biogenesis; lipoteichoic acid biosynthesis. Its function is as follows. Catalyzes the first step in the D-alanylation of lipoteichoic acid (LTA), the activation of D-alanine and its transfer onto the D-alanyl carrier protein (Dcp) DltC. In an ATP-dependent two-step reaction, forms a high energy D-alanyl-AMP intermediate, followed by transfer of the D-alanyl residue as a thiol ester to the phosphopantheinyl prosthetic group of the Dcp. D-alanylation of LTA plays an important role in modulating the properties of the cell wall in Gram-positive bacteria, influencing the net charge of the cell wall. The polypeptide is D-alanine--D-alanyl carrier protein ligase (Streptococcus pyogenes serotype M28 (strain MGAS6180)).